The primary structure comprises 1206 residues: Cilia- and flagella-associated protein 157 (1206 aa).

Disordered stretches follow at residues 26-52, 79-109, 125-173, and 327-405; these read GGGG…GRDL, RAEQ…QQAP, EATC…RGPL, and GSGK…EEDW. Composition is skewed to low complexity over residues 88-109, 156-173, and 385-397; these read GRPQ…QQAP, AKAV…RGPL, and QQLG…QPGG. 3 coiled-coil regions span residues 634-732, 799-833, and 876-903; these read TDEL…KTKD, TEKL…LARR, and LHLA…KTAE. Disordered regions lie at residues 936-990, 1011-1072, and 1168-1206; these read TTTN…DELS, LSHG…GATS, and PWGK…SLKV. Composition is skewed to low complexity over residues 951–973 and 1014–1035; these read AGAD…SSSA and GPLS…ALAG. Composition is skewed to gly residues over residues 1037 to 1046 and 1058 to 1067; these read WGPGSPGGSR and SAGGMGGPQG. Composition is skewed to polar residues over residues 1175-1184 and 1193-1206; these read QQPLTTTKHS and GPSN…SLKV.

This sequence belongs to the CFAP157 family.

Its subcellular location is the cell projection. It is found in the cilium. It localises to the flagellum. The chain is Cilia- and flagella-associated protein 157 from Chlamydomonas reinhardtii (Chlamydomonas smithii).